The primary structure comprises 284 residues: LVSTPWIELFNAFPSLLRHFPGSHNTIFKNMTEQRKFILEEIKKHQESLDLNNPQDFIDYFLIKMEKEKHNKHSEFTMDNLITTVWDVFSAGTETTSLTLRYGLLLLLKHPEVTAKVQEEIDRVVGRNRSPCMQDRSRMPYTDAVLHEIQRYIDLVPSNLPHVATQDVKFREYLIPKGTAILTSLTSVLHDGKEFPNPGQFDPAHFLDESGNFKKTDHFMAFSAGKRVCVGEGLARMELFLLLVSILQHFTLKPVVDPKHIDIAPSFKGMLSIPPFCEMCFIPV.

Heme is bound at residue cysteine 229.

Belongs to the cytochrome P450 family. Heme serves as cofactor.

Its subcellular location is the endoplasmic reticulum membrane. The protein localises to the microsome membrane. It carries out the reaction an organic molecule + reduced [NADPH--hemoprotein reductase] + O2 = an alcohol + oxidized [NADPH--hemoprotein reductase] + H2O + H(+). Cytochromes P450 are a group of heme-thiolate monooxygenases. In liver microsomes, this enzyme is involved in an NADPH-dependent electron transport pathway. It oxidizes a variety of structurally unrelated compounds, including steroids, fatty acids, and xenobiotics. The sequence is that of Cytochrome P450 2C31 (CYP2C31) from Capra hircus aegagrus (Wild goat).